A 357-amino-acid polypeptide reads, in one-letter code: Hsp70-binding protein 1 (357 aa).

The tract at residues 1-68 (MADKGSGGSR…DPPPEPMSEE (68 aa)) is disordered. The segment covering 23 to 35 (SSGGSGSSAGGSG) has biased composition (gly residues). ARM repeat units follow at residues 130 to 172 (ENMD…TCSQ), 175 to 215 (AAIQ…CLVR), 218 to 257 (EAGLLQFLRLDGFSVLMRAMQQQVQKLKVKSAFLLQNLLV), and 260 to 299 (PEHKGTLCSMGMVQQLVALVRTEHSPFHEHVLGALCSLVT). A phosphoserine mark is found at S349 and S354.

As to quaternary structure, interacts with the ATP-binding domain of HSPA1A. Detected in a ternary complex containing STUB1, HSPA1A and HSPBP1. Interacts with PGLYRP1; this interaction blocks the cytotoxic activity of the PGLYRP1-HSPA1A complex.

Functionally, inhibits HSPA1A chaperone activity by changing the conformation of the ATP-binding domain of HSPA1A and interfering with ATP binding. Interferes with ubiquitination mediated by STUB1 and inhibits chaperone-assisted degradation of target proteins. The protein is Hsp70-binding protein 1 (Hspbp1) of Mus musculus (Mouse).